Consider the following 147-residue polypeptide: Putative cystatin-9-like protein CST9LP1 (147 aa).

The first 28 residues, 1 to 28 (MWSLPPSRALSCAPLLLLFSFQFLVTYA), serve as a signal peptide directing secretion. A disulfide bridge links C98 with C108. N117 and N139 each carry an N-linked (GlcNAc...) asparagine glycan. C122 and C142 are disulfide-bonded.

Belongs to the cystatin family.

It is found in the secreted. This is Putative cystatin-9-like protein CST9LP1 (CST9LP1) from Homo sapiens (Human).